The following is a 230-amino-acid chain: 2-C-methyl-D-erythritol 4-phosphate cytidylyltransferase (230 aa).

Belongs to the IspD/TarI cytidylyltransferase family. IspD subfamily.

The enzyme catalyses 2-C-methyl-D-erythritol 4-phosphate + CTP + H(+) = 4-CDP-2-C-methyl-D-erythritol + diphosphate. It functions in the pathway isoprenoid biosynthesis; isopentenyl diphosphate biosynthesis via DXP pathway; isopentenyl diphosphate from 1-deoxy-D-xylulose 5-phosphate: step 2/6. Catalyzes the formation of 4-diphosphocytidyl-2-C-methyl-D-erythritol from CTP and 2-C-methyl-D-erythritol 4-phosphate (MEP). In Laribacter hongkongensis (strain HLHK9), this protein is 2-C-methyl-D-erythritol 4-phosphate cytidylyltransferase.